The primary structure comprises 156 residues: Low molecular weight protein-tyrosine-phosphatase YfkJ (156 aa).

Cysteine 8 (nucleophile) is an active-site residue. The active site involves arginine 14. The active-site Proton donor is aspartate 125.

The protein belongs to the low molecular weight phosphotyrosine protein phosphatase family.

It catalyses the reaction O-phospho-L-tyrosyl-[protein] + H2O = L-tyrosyl-[protein] + phosphate. Efficiently inhibited by Cu(2+) ion, Zn(2+) ion and N-ethylmaleimide, while the addition of Mg(2+), Ca(2+) or Fe(3+) ions has minimal effect. Inhibited in a competitive manner by vanadate. In terms of biological role, dephosphorylates the phosphotyrosine-containing proteins. Involved in ethanol stress resistance. This is Low molecular weight protein-tyrosine-phosphatase YfkJ (yfkJ) from Bacillus subtilis (strain 168).